The sequence spans 177 residues: Protein BROTHER of FT and TFL 1 (177 aa).

The protein belongs to the phosphatidylethanolamine-binding protein family.

The protein localises to the cytoplasm. May form complexes with phosphorylated ligands by interfering with kinases and their effectors. The chain is Protein BROTHER of FT and TFL 1 (BFT) from Arabidopsis thaliana (Mouse-ear cress).